A 337-amino-acid polypeptide reads, in one-letter code: ATP-dependent 6-phosphofructokinase (337 aa).

G11 is a binding site for ATP. ADP is bound at residue 21 to 25 (RAVVR). ATP contacts are provided by residues 72–73 (RY) and 102–105 (GDGS). D103 is a binding site for Mg(2+). 125 to 127 (TID) is a substrate binding site. The active-site Proton acceptor is D127. Residue R154 participates in ADP binding. Residues R162 and 169–171 (MGR) each bind substrate. ADP is bound by residues 185-187 (GAD) and 214-216 (KNH). Residues E223, R245, and 251–254 (HILR) each bind substrate.

Belongs to the phosphofructokinase type A (PFKA) family. ATP-dependent PFK group I subfamily. Prokaryotic clade 'B1' sub-subfamily. As to quaternary structure, homotetramer. Mg(2+) serves as cofactor.

It localises to the cytoplasm. The catalysed reaction is beta-D-fructose 6-phosphate + ATP = beta-D-fructose 1,6-bisphosphate + ADP + H(+). Its pathway is carbohydrate degradation; glycolysis; D-glyceraldehyde 3-phosphate and glycerone phosphate from D-glucose: step 3/4. Allosterically activated by ADP and other diphosphonucleosides, and allosterically inhibited by phosphoenolpyruvate. In terms of biological role, catalyzes the phosphorylation of D-fructose 6-phosphate to fructose 1,6-bisphosphate by ATP, the first committing step of glycolysis. This is ATP-dependent 6-phosphofructokinase from Streptococcus mutans serotype c (strain ATCC 700610 / UA159).